The primary structure comprises 303 residues: MSVFLSVIGALLLDALLGEPKRAHPLVAFGRLADRLEQHFNGAAGRGWRSHGVTAWCLAVLPLTLLAWLLSLLPGIGWLAEIVLLYLALGLRSLGEHALPVAQALWRHDLPEARRRVACIVSRDTSQLDEEGVARAATESVLENGSDAVFAALFWFIVAGAPGVVLYRLSNTLDAMWGYRNARFERFGWAAARIDDLLNYVPARLVAVTYALLGRTRRALRCWRTQAPLWDSPNAGPVMAAGAGALGVVLGGAAIYHGELHARPELGRGSAPQARHIEHALDLVWAGVGVWLLVLLFGGWLYA.

The next 4 helical transmembrane spans lie at 65–85 (LLAW…IVLL), 147–167 (DAVF…VVLY), 235–255 (AGPV…GAAI), and 283–303 (LVWA…WLYA).

It belongs to the CobD/CbiB family.

Its subcellular location is the cell membrane. The protein operates within cofactor biosynthesis; adenosylcobalamin biosynthesis. Functionally, converts cobyric acid to cobinamide by the addition of aminopropanol on the F carboxylic group. The chain is Cobalamin biosynthesis protein CobD from Stutzerimonas stutzeri (strain A1501) (Pseudomonas stutzeri).